Consider the following 689-residue polypeptide: MAVNDYEPGSMVITHVQGGGRDIIQYIPARSSYGTPPFVPPGPSPYVGTGMQEYRKLRSTLDKSHSELKKNLKNETLKEVDELKSEAGLPGKAVSANDIRDEKSIVDALMDAKAKSLKAIEDRPANLYTASDFPQKSESMYQSQLLASRKFYGEFLDRHMSELAKAYSADIYKAQIAILKQTSQELENKARSLEAEAQRAAAEVEADYKARKANVEKKVQSELDQAGNALPQLTNPTPEQWLERATQLVTQAIANKKKLQTANNALIAKAPNALEKQKATYNADLLVDEIASLQARLDKLNAETARRKEIARQAAIRAANTYAMPANGSVVATAAGRGLIQVAQGAASLAQAISDAIAVLGRVLASAPSVMAVGFASLTYSSRTAEQWQDQTPDSVRYALGMDAAKLGLPPSVNLNAVAKASGTVDLPMRLTNEARGNTTTLSVVSTDGVSVPKAVPVRMAAYNATTGLYEVTVPSTTAEAPPLILTWTPASPPGNQNPSSTTPVVPKPVPVYEGATLTPVKATPETYPGVITLPEDLIIGFPADSGIKPIYVMFRDPRDVPGAATGKGQPVSGNWLGAASQGEGAPIPSQIADKLRGKTFKNWRDFREQFWIAVANDPELSKQFNPGSLAVMRDGGAPYVRESEQAGGRIKIEIHHKVRIADGGGVYNMGNLVAVTPKRHIEIHKGGK.

The Zn(2+) site is built by H656, H681, and H685.

The protein belongs to the colicin/pyosin nuclease family. In terms of assembly, purified pyocin S2 makes up a complex of the two (large and small) proteins. The large protein, but not the pyocin complex, shows in vitro DNase activity.

Causes breakdown of chromosomal DNA as well as complete inhibition of lipid synthesis in sensitive cells. In Pseudomonas aeruginosa (strain ATCC 15692 / DSM 22644 / CIP 104116 / JCM 14847 / LMG 12228 / 1C / PRS 101 / PAO1), this protein is Pyocin-S2 (pys2).